Reading from the N-terminus, the 159-residue chain is NADH-quinone oxidoreductase subunit I (159 aa).

4Fe-4S ferredoxin-type domains follow at residues arginine 51–aspartate 80 and threonine 90–asparagine 119. [4Fe-4S] cluster is bound by residues cysteine 60, cysteine 63, cysteine 66, cysteine 70, cysteine 99, cysteine 102, cysteine 105, and cysteine 109.

This sequence belongs to the complex I 23 kDa subunit family. As to quaternary structure, NDH-1 is composed of 14 different subunits. Subunits NuoA, H, J, K, L, M, N constitute the membrane sector of the complex. The cofactor is [4Fe-4S] cluster.

Its subcellular location is the cell inner membrane. The enzyme catalyses a quinone + NADH + 5 H(+)(in) = a quinol + NAD(+) + 4 H(+)(out). Its function is as follows. NDH-1 shuttles electrons from NADH, via FMN and iron-sulfur (Fe-S) centers, to quinones in the respiratory chain. The immediate electron acceptor for the enzyme in this species is believed to be ubiquinone. Couples the redox reaction to proton translocation (for every two electrons transferred, four hydrogen ions are translocated across the cytoplasmic membrane), and thus conserves the redox energy in a proton gradient. This chain is NADH-quinone oxidoreductase subunit I, found in Rickettsia akari (strain Hartford).